We begin with the raw amino-acid sequence, 201 residues long: Holliday junction branch migration complex subunit RuvA (201 aa).

The domain I stretch occupies residues 1–61 (MIEFVKGTID…EDAFSLYGFS (61 aa)). Positions 62 to 140 (TREEKALFTK…DVVPEMIDNL (79 aa)) are domain II. The tract at residues 141 to 150 (FNHEARIEKQ) is flexible linker. The domain III stretch occupies residues 151-201 (EAETALDEALEALRVLGYAEKEIKKVLPHLKEETALSTDQYVKKALQKLLK).

It belongs to the RuvA family. Homotetramer. Forms an RuvA(8)-RuvB(12)-Holliday junction (HJ) complex. HJ DNA is sandwiched between 2 RuvA tetramers; dsDNA enters through RuvA and exits via RuvB. An RuvB hexamer assembles on each DNA strand where it exits the tetramer. Each RuvB hexamer is contacted by two RuvA subunits (via domain III) on 2 adjacent RuvB subunits; this complex drives branch migration. In the full resolvosome a probable DNA-RuvA(4)-RuvB(12)-RuvC(2) complex forms which resolves the HJ.

It localises to the cytoplasm. Its function is as follows. The RuvA-RuvB-RuvC complex processes Holliday junction (HJ) DNA during genetic recombination and DNA repair, while the RuvA-RuvB complex plays an important role in the rescue of blocked DNA replication forks via replication fork reversal (RFR). RuvA specifically binds to HJ cruciform DNA, conferring on it an open structure. The RuvB hexamer acts as an ATP-dependent pump, pulling dsDNA into and through the RuvAB complex. HJ branch migration allows RuvC to scan DNA until it finds its consensus sequence, where it cleaves and resolves the cruciform DNA. The chain is Holliday junction branch migration complex subunit RuvA from Bacillus velezensis (strain DSM 23117 / BGSC 10A6 / LMG 26770 / FZB42) (Bacillus amyloliquefaciens subsp. plantarum).